Reading from the N-terminus, the 68-residue chain is Large ribosomal subunit protein uL30 (68 aa).

This sequence belongs to the universal ribosomal protein uL30 family. Part of the 50S ribosomal subunit.

The sequence is that of Large ribosomal subunit protein uL30 from Bartonella henselae (strain ATCC 49882 / DSM 28221 / CCUG 30454 / Houston 1) (Rochalimaea henselae).